Consider the following 2193-residue polypeptide: Highly reducing polyketide synthase VdtX (2193 aa).

In terms of domain architecture, Ketosynthase family 3 (KS3) spans 1–417 (MAICGIAVRL…GVNAHVIIES (417 aa)). Active-site for beta-ketoacyl synthase activity residues include C170, H306, and H340. Residues 513-809 (VFAGQGAQWP…HPYVPCLIRF (297 aa)) form a malonyl-CoA:ACP transacylase (MAT) domain region. An N-terminal hotdog fold region spans residues 877-1001 (HELLGTRVVD…GEVAQENLSR (125 aa)). Residues 877 to 1128 (HELLGTRVVD…DIVLRPLGAN (252 aa)) form a dehydratase (DH) domain region. One can recognise a PKS/mFAS DH domain in the interval 877–1202 (HELLGTRVVD…LQRQPKPSSE (326 aa)). The active-site Proton acceptor; for dehydratase activity is the H909. Positions 1032 to 1202 (SVTSNTVSGR…LQRQPKPSSE (171 aa)) are C-terminal hotdog fold. Catalysis depends on D1093, which acts as the Proton donor; for dehydratase activity. Residues 1256-1390 (NYLNEPQQRI…DRWDSILKAA (135 aa)) are methyltransferase (CMet) domain. The segment at 1575 to 1783 (GQQVQLLGDD…SGQHIGQLRL (209 aa)) is enoyl reductase (ER) domain. A ketoreductase (KR) domain region spans residues 1807–1981 (ASYLLVGGLG…ASVIDIGEVQ (175 aa)). In terms of domain architecture, Carrier spans 2102–2183 (PSATQFVSLE…AMGEHVIREL (82 aa)). S2143 carries the post-translational modification O-(pantetheine 4'-phosphoryl)serine.

Highly reducing polyketide synthase; part of the gene cluster that mediates the biosynthesis of viriditoxin, one of the 'classical' secondary metabolites produced by fungi and that has antibacterial activity. The first step is performed by the polyketide synthase VdtA which condenses one acetyl-CoA and 6 malonyl-CoA units to form the heptaketide monomer backbone of viriditoxin. The product of VdtA is then O-methylated on C7 by the O-methyltransferase VdtC. The O-methyl group is important for the stereoselective coupling of the monomers at the final step of viriditoxin biosynthesis. The short-chain dehydrogenase/reductase VdtF is involved in the reduction of the C3-C4 double bond. The FAD-binding monooxygenase VdtE then converts the ketone group into a methyl-ester group to yield semi-viriditoxin. Finally, the laccase VdtB is involved in dimerization of 2 semi-viriditoxin molecules to yield the final viriditoxin. The non-catalytic carboxylesterase-like protein VdtD affects the stereochemistical outcome of the coupling. The highly reducing polyketide synthase VdtX is not involved in viriditoxin synthesis, but might possibly play a role in the production of additional metabolites not identified yet. This chain is Highly reducing polyketide synthase VdtX, found in Byssochlamys spectabilis (Paecilomyces variotii).